The primary structure comprises 545 residues: Hyaluronidase PH-20 (545 aa).

An N-terminal signal peptide occupies residues 1-35 (MGVLKFKHIFFGSAVELSGVFQIVFIFLLIPCCLT). Cystine bridges form between Cys60/Cys355 and Cys224/Cys239. Asn82 carries N-linked (GlcNAc...) asparagine glycosylation. Glu148 (proton donor) is an active-site residue. Asn180 carries an N-linked (GlcNAc...) asparagine glycan. N-linked (GlcNAc...) asparagine glycosylation is present at Asn372. Cystine bridges form between Cys380–Cys391, Cys385–Cys439, and Cys441–Cys468.

Belongs to the glycosyl hydrolase 56 family. In terms of tissue distribution, testis.

Its subcellular location is the cell membrane. The enzyme catalyses Random hydrolysis of (1-&gt;4)-linkages between N-acetyl-beta-D-glucosamine and D-glucuronate residues in hyaluronate.. Its function is as follows. Involved in sperm-egg adhesion. Upon fertilization sperm must first penetrate a layer of cumulus cells that surrounds the egg before reaching the zona pellucida. The cumulus cells are embedded in a matrix containing hyaluronic acid which is formed prior to ovulation. This protein aids in penetrating the layer of cumulus cells by digesting hyaluronic acid. The polypeptide is Hyaluronidase PH-20 (SPAM1) (Oryctolagus cuniculus (Rabbit)).